The chain runs to 694 residues: Polyribonucleotide nucleotidyltransferase (694 aa).

Residues Asp485 and Asp491 each coordinate Mg(2+). Residues 552–611 (PRIETMQIKPNKIATVIGPGGKQIRQIIEEAGVQIDINDSGLVSISASSPQAIEKAKSII) enclose the KH domain. Residues 621–689 (GKIYEGRVTS…EKGQYKLSHK (69 aa)) enclose the S1 motif domain.

It belongs to the polyribonucleotide nucleotidyltransferase family. Mg(2+) serves as cofactor.

The protein localises to the cytoplasm. It carries out the reaction RNA(n+1) + phosphate = RNA(n) + a ribonucleoside 5'-diphosphate. In terms of biological role, involved in mRNA degradation. Catalyzes the phosphorolysis of single-stranded polyribonucleotides processively in the 3'- to 5'-direction. In Chlamydia felis (strain Fe/C-56) (Chlamydophila felis), this protein is Polyribonucleotide nucleotidyltransferase.